A 216-amino-acid chain; its full sequence is Peptide deformylase (216 aa).

Fe cation is bound by residues C134 and H178. The active site involves E179. Position 182 (H182) interacts with Fe cation.

The protein belongs to the polypeptide deformylase family. Requires Fe(2+) as cofactor.

It catalyses the reaction N-terminal N-formyl-L-methionyl-[peptide] + H2O = N-terminal L-methionyl-[peptide] + formate. In terms of biological role, removes the formyl group from the N-terminal Met of newly synthesized proteins. Requires at least a dipeptide for an efficient rate of reaction. N-terminal L-methionine is a prerequisite for activity but the enzyme has broad specificity at other positions. The sequence is that of Peptide deformylase from Mycoplasma pneumoniae (strain ATCC 29342 / M129 / Subtype 1) (Mycoplasmoides pneumoniae).